A 390-amino-acid chain; its full sequence is uncharacterized protein (390 aa).

The next 11 helical transmembrane spans lie at 7–27 (IYIL…ISGI), 35–55 (LGIT…VYAL), 77–97 (LGLF…GWFI), 101–121 (IIMA…AAKI), 128–148 (GSAI…GVPL), 161–181 (VFGA…FTLP), 203–223 (VAMG…AYTY), 238–258 (LLSG…KFGG), 281–301 (LILL…LILW), 335–355 (MQFA…NVSL), and 357–377 (SITW…LLIF).

This sequence belongs to the major facilitator superfamily.

Its subcellular location is the cell membrane. This is an uncharacterized protein from Bacillus subtilis (strain 168).